We begin with the raw amino-acid sequence, 344 residues long: N-acetyl-gamma-glutamyl-phosphate reductase (344 aa).

Residue C150 is part of the active site.

Belongs to the NAGSA dehydrogenase family. Type 1 subfamily.

It is found in the cytoplasm. It carries out the reaction N-acetyl-L-glutamate 5-semialdehyde + phosphate + NADP(+) = N-acetyl-L-glutamyl 5-phosphate + NADPH + H(+). Its pathway is amino-acid biosynthesis; L-arginine biosynthesis; N(2)-acetyl-L-ornithine from L-glutamate: step 3/4. Its function is as follows. Catalyzes the NADPH-dependent reduction of N-acetyl-5-glutamyl phosphate to yield N-acetyl-L-glutamate 5-semialdehyde. The sequence is that of N-acetyl-gamma-glutamyl-phosphate reductase from Pseudomonas putida (strain W619).